A 293-amino-acid polypeptide reads, in one-letter code: Formamidopyrimidine-DNA glycosylase (293 aa).

Proline 2 serves as the catalytic Schiff-base intermediate with DNA. The active-site Proton donor is glutamate 3. Lysine 58 functions as the Proton donor; for beta-elimination activity in the catalytic mechanism. DNA is bound by residues histidine 104, arginine 123, and lysine 166. An FPG-type zinc finger spans residues lysine 257–lysine 293. The active-site Proton donor; for delta-elimination activity is arginine 283.

This sequence belongs to the FPG family. Monomer. The cofactor is Zn(2+).

It carries out the reaction Hydrolysis of DNA containing ring-opened 7-methylguanine residues, releasing 2,6-diamino-4-hydroxy-5-(N-methyl)formamidopyrimidine.. The catalysed reaction is 2'-deoxyribonucleotide-(2'-deoxyribose 5'-phosphate)-2'-deoxyribonucleotide-DNA = a 3'-end 2'-deoxyribonucleotide-(2,3-dehydro-2,3-deoxyribose 5'-phosphate)-DNA + a 5'-end 5'-phospho-2'-deoxyribonucleoside-DNA + H(+). In terms of biological role, involved in base excision repair of DNA damaged by oxidation or by mutagenic agents. Acts as a DNA glycosylase that recognizes and removes damaged bases. Has a preference for oxidized purines, such as 7,8-dihydro-8-oxoguanine (8-oxoG). Has AP (apurinic/apyrimidinic) lyase activity and introduces nicks in the DNA strand. Cleaves the DNA backbone by beta-delta elimination to generate a single-strand break at the site of the removed base with both 3'- and 5'-phosphates. The protein is Formamidopyrimidine-DNA glycosylase of Bradyrhizobium diazoefficiens (strain JCM 10833 / BCRC 13528 / IAM 13628 / NBRC 14792 / USDA 110).